Here is a 377-residue protein sequence, read N- to C-terminus: Cyclin-I (377 aa).

A disordered region spans residues 356–377 (TDLSRQEGHASPCPPLQPVSVM). Residues 367 to 377 (PCPPLQPVSVM) show a composition bias toward pro residues.

This sequence belongs to the cyclin family.

In Mus musculus (Mouse), this protein is Cyclin-I (Ccni).